A 79-amino-acid polypeptide reads, in one-letter code: Bacteriochlorophyll c-binding protein (79 aa).

Histidine 25 serves as a coordination point for a bacteriochlorophyll c.

The protein belongs to the BChl C/E-binding protein family.

The protein localises to the chlorosome. Its subcellular location is the chlorosome envelope. Functionally, component of the photosynthetic apparatus. The light harvesting B740 complex binds bacteriochlorophyll c. The protein is Bacteriochlorophyll c-binding protein (csmA) of Chlorobaculum tepidum (strain ATCC 49652 / DSM 12025 / NBRC 103806 / TLS) (Chlorobium tepidum).